A 302-amino-acid chain; its full sequence is Recombination-associated protein RdgC (302 aa).

It belongs to the RdgC family.

The protein resides in the cytoplasm. It is found in the nucleoid. Functionally, may be involved in recombination. This Xylella fastidiosa (strain 9a5c) protein is Recombination-associated protein RdgC.